The sequence spans 497 residues: Serine hydroxymethyltransferase (497 aa).

Residues leucine 176 and 180–182 each bind (6S)-5,6,7,8-tetrahydrofolate; that span reads GHL. Lysine 289 bears the N6-(pyridoxal phosphate)lysine mark.

It belongs to the SHMT family. In terms of assembly, homodimer. The cofactor is pyridoxal 5'-phosphate.

It localises to the cytoplasm. The enzyme catalyses (6R)-5,10-methylene-5,6,7,8-tetrahydrofolate + glycine + H2O = (6S)-5,6,7,8-tetrahydrofolate + L-serine. The protein operates within one-carbon metabolism; tetrahydrofolate interconversion. Its pathway is amino-acid biosynthesis; glycine biosynthesis; glycine from L-serine: step 1/1. In terms of biological role, catalyzes the reversible interconversion of serine and glycine with tetrahydrofolate (THF) serving as the one-carbon carrier. This reaction serves as the major source of one-carbon groups required for the biosynthesis of purines, thymidylate, methionine, and other important biomolecules. Also exhibits THF-independent aldolase activity toward beta-hydroxyamino acids, producing glycine and aldehydes, via a retro-aldol mechanism. The polypeptide is Serine hydroxymethyltransferase (Chlamydia muridarum (strain MoPn / Nigg)).